A 404-amino-acid polypeptide reads, in one-letter code: D-galactonate dehydratase family member PC1_0802 (404 aa).

2 residues coordinate substrate: N37 and H122. Y159 serves as the catalytic Proton donor/acceptor. Mg(2+) is bound at residue D212. H214 acts as the Proton donor/acceptor in catalysis. E238 and E264 together coordinate Mg(2+). E264, R285, H314, D318, and E341 together coordinate substrate.

Belongs to the mandelate racemase/muconate lactonizing enzyme family. GalD subfamily. Requires Mg(2+) as cofactor.

It catalyses the reaction D-mannonate = 2-dehydro-3-deoxy-D-gluconate + H2O. Its function is as follows. Has low D-mannonate dehydratase activity (in vitro), suggesting that this is not a physiological substrate and that it has no significant role in D-mannonate degradation in vivo. Has no detectable activity with a panel of 70 other acid sugars (in vitro). The polypeptide is D-galactonate dehydratase family member PC1_0802 (Pectobacterium carotovorum subsp. carotovorum (strain PC1)).